We begin with the raw amino-acid sequence, 313 residues long: Beta-lactamase FAR-1 (313 aa).

The signal sequence occupies residues 1–28; that stretch reads MPGVDISFLKKSGRRTMAAAAVIALLGG. C29 carries the N-palmitoyl cysteine lipid modification. The S-diacylglycerol cysteine moiety is linked to residue C29. The active-site Acyl-ester intermediate is the S94. Residue S154 coordinates substrate. E190 serves as the catalytic Proton acceptor. 258–260 contributes to the substrate binding site; the sequence is KTG.

The protein belongs to the class-A beta-lactamase family.

The protein localises to the cell membrane. It catalyses the reaction a beta-lactam + H2O = a substituted beta-amino acid. Inhibited by clavulanic acid, and at a low level by tazobactam and sulbactam. In terms of biological role, confers high levels of resistance to amoxicillin, benzylpenicillin, piperacillin, ticarcillin and cephalothin. Also hydrolyzes aztreonam at a low level. Not active against ceftazidime, cefotaxime and imipenem. This chain is Beta-lactamase FAR-1 (bla), found in Nocardia farcinica (strain IFM 10152).